Consider the following 458-residue polypeptide: tRNA-2-methylthio-N(6)-dimethylallyladenosine synthase (458 aa).

The 118-residue stretch at glutamine 3–cysteine 120 folds into the MTTase N-terminal domain. Residues cysteine 12, cysteine 49, cysteine 83, cysteine 157, cysteine 161, and cysteine 164 each coordinate [4Fe-4S] cluster. The Radical SAM core domain occupies arginine 143 to lysine 375. Residues alanine 378 to glycine 441 enclose the TRAM domain.

It belongs to the methylthiotransferase family. MiaB subfamily. In terms of assembly, monomer. It depends on [4Fe-4S] cluster as a cofactor.

It is found in the cytoplasm. The catalysed reaction is N(6)-dimethylallyladenosine(37) in tRNA + (sulfur carrier)-SH + AH2 + 2 S-adenosyl-L-methionine = 2-methylsulfanyl-N(6)-dimethylallyladenosine(37) in tRNA + (sulfur carrier)-H + 5'-deoxyadenosine + L-methionine + A + S-adenosyl-L-homocysteine + 2 H(+). Functionally, catalyzes the methylthiolation of N6-(dimethylallyl)adenosine (i(6)A), leading to the formation of 2-methylthio-N6-(dimethylallyl)adenosine (ms(2)i(6)A) at position 37 in tRNAs that read codons beginning with uridine. This chain is tRNA-2-methylthio-N(6)-dimethylallyladenosine synthase, found in Methylococcus capsulatus (strain ATCC 33009 / NCIMB 11132 / Bath).